Here is a 496-residue protein sequence, read N- to C-terminus: Cobyric acid synthase (496 aa).

A GATase cobBQ-type domain is found at 256–444; it reads KINIAVVLLR…IHGILDNQAF (189 aa). The Nucleophile role is filled by Cys337. His436 is an active-site residue.

Belongs to the CobB/CobQ family. CobQ subfamily.

Its pathway is cofactor biosynthesis; adenosylcobalamin biosynthesis. Catalyzes amidations at positions B, D, E, and G on adenosylcobyrinic A,C-diamide. NH(2) groups are provided by glutamine, and one molecule of ATP is hydrogenolyzed for each amidation. In Phocaeicola vulgatus (strain ATCC 8482 / DSM 1447 / JCM 5826 / CCUG 4940 / NBRC 14291 / NCTC 11154) (Bacteroides vulgatus), this protein is Cobyric acid synthase.